A 121-amino-acid polypeptide reads, in one-letter code: Securin (121 aa).

Positions 1 to 24 (RATEKSVKTNGPLKQKQTTFSAKK) are disordered. 2 consecutive short sequence motifs (TEK-box) follow at residues 3 to 5 (TEK) and 26 to 28 (TEK). Residues 93–121 (LGPPSPLNMPSPPWESDVLQSPSSILSTL) form a disordered region. An SH3-binding motif is present at residues 95-105 (PPSPLNMPSPP). Over residues 95–105 (PPSPLNMPSPP) the composition is skewed to pro residues. Ser-97 is modified (phosphoserine; by CDK1). The segment covering 110–121 (VLQSPSSILSTL) has biased composition (polar residues).

It belongs to the securin family. Interacts with the caspase-like ESPL1, and prevents its protease activity probably by covering its active site. Interacts with p53/TP53 and blocks its activity probably by blocking its binding to DNA. Interacts with the Ku 70 kDa subunit of ds-DNA kinase. Interacts with PTTG1IP. Interacts with RPS10 and DNAJA1. Post-translationally, phosphorylated by CDK1 during mitosis. In terms of processing, phosphorylated in vitro by ds-DNA kinase. Ubiquitinated through 'Lys-11' linkage of ubiquitin moieties by the anaphase promoting complex (APC) at the onset of anaphase, conducting to its degradation. 'Lys-11'-linked ubiquitination is mediated by the E2 ligase UBE2C/UBCH10.

The protein localises to the cytoplasm. Its subcellular location is the nucleus. Its function is as follows. Regulatory protein, which plays a central role in chromosome stability, in the p53/TP53 pathway, and DNA repair. Probably acts by blocking the action of key proteins. During the mitosis, it blocks Separase/ESPL1 function, preventing the proteolysis of the cohesin complex and the subsequent segregation of the chromosomes. At the onset of anaphase, it is ubiquitinated, conducting to its destruction and to the liberation of ESPL1. Its function is however not limited to a blocking activity, since it is required to activate ESPL1. Negatively regulates the transcriptional activity and related apoptosis activity of p53/TP53. The negative regulation of p53/TP53 may explain the strong transforming capability of the protein when it is overexpressed. May also play a role in DNA repair via its interaction with Ku, possibly by connecting DNA damage-response pathways with sister chromatid separation. In Sus scrofa (Pig), this protein is Securin (PTTG1).